The primary structure comprises 142 residues: Large ribosomal subunit protein uL11 (142 aa).

Belongs to the universal ribosomal protein uL11 family. As to quaternary structure, part of the ribosomal stalk of the 50S ribosomal subunit. Interacts with L10 and the large rRNA to form the base of the stalk. L10 forms an elongated spine to which L12 dimers bind in a sequential fashion forming a multimeric L10(L12)X complex. One or more lysine residues are methylated.

Functionally, forms part of the ribosomal stalk which helps the ribosome interact with GTP-bound translation factors. This chain is Large ribosomal subunit protein uL11, found in Yersinia pseudotuberculosis serotype O:1b (strain IP 31758).